The chain runs to 192 residues: Adenylate kinase (192 aa).

Residue 12-17 coordinates ATP; sequence GSGKTT. An NMP region spans residues 34–63; that stretch reads STGDLLRAEVASGSELGKTIDSFISKGNLV. AMP contacts are provided by residues Thr35, Arg40, 61-63, 88-91, and Gln95; these read NLV and GYPR. Positions 130–136 are LID; it reads GRNRGAD. Arg131 is an ATP binding site. Positions 133 and 145 each coordinate AMP. Arg173 is an ATP binding site.

Belongs to the adenylate kinase family. In terms of assembly, monomer.

The protein localises to the cytoplasm. It catalyses the reaction AMP + ATP = 2 ADP. It participates in purine metabolism; AMP biosynthesis via salvage pathway; AMP from ADP: step 1/1. Functionally, catalyzes the reversible transfer of the terminal phosphate group between ATP and AMP. Plays an important role in cellular energy homeostasis and in adenine nucleotide metabolism. In Campylobacter jejuni subsp. jejuni serotype O:2 (strain ATCC 700819 / NCTC 11168), this protein is Adenylate kinase.